The primary structure comprises 94 residues: Co-chaperonin GroES (94 aa).

This sequence belongs to the GroES chaperonin family. Heptamer of 7 subunits arranged in a ring. Interacts with the chaperonin GroEL.

It is found in the cytoplasm. Functionally, together with the chaperonin GroEL, plays an essential role in assisting protein folding. The GroEL-GroES system forms a nano-cage that allows encapsulation of the non-native substrate proteins and provides a physical environment optimized to promote and accelerate protein folding. GroES binds to the apical surface of the GroEL ring, thereby capping the opening of the GroEL channel. The protein is Co-chaperonin GroES of Limosilactobacillus reuteri (strain DSM 20016) (Lactobacillus reuteri).